The primary structure comprises 886 residues: Interference hedgehog (886 aa).

Residues 1–20 form the signal peptide; the sequence is MTLLTSSLLLFSLLTSRLEA. The Extracellular segment spans residues 21–709; sequence IPVLEKSPAH…ETFNMSPMLT (689 aa). A compositionally biased stretch (low complexity) spans 29-38; that stretch reads AHPAHSAHPA. Residues 29–52 form a disordered region; sequence AHPAHSAHPAHPAHPAHPAHPSPG. Ig-like C2-type domains are found at residues 51 to 148, 138 to 238, 258 to 346, and 352 to 438; these read PGVR…IARL, PLVV…ERIQ, PHLL…YIKV, and PQIV…LQVN. Intrachain disulfides connect C74–C132, C179–C226, C282–C330, and C373–C420. Residues N108 and N215 are each glycosylated (N-linked (GlcNAc...) asparagine). The tract at residues 432–475 is disordered; sequence GTLLQVNPKQIQEPRESGGTHRPKPNQGSRQKQMYPPTPPNVTR. Fibronectin type-III domains follow at residues 467–573 and 581–676; these read PPTP…LQPG and VPEL…TQRP. N472 carries an N-linked (GlcNAc...) asparagine glycan. Positions 503, 507, 509, and 547 each coordinate heparin. N-linked (GlcNAc...) asparagine glycosylation is present at N563. The disordered stretch occupies residues 668 to 697; that stretch reads LKQGRTQRPKTSTTEEPTLQMGDRDTTTPS. A compositionally biased stretch (polar residues) spans 671–684; sequence GRTQRPKTSTTEEP. Residue N699 is glycosylated (N-linked (GlcNAc...) asparagine). A helical transmembrane segment spans residues 710 to 730; the sequence is GTIGGGAVLILLLISTCFCVC. Residues 731 to 886 are Cytoplasmic-facing; the sequence is RRRNSRSRGN…SSGSLNSVGV (156 aa). Disordered stretches follow at residues 734–768 and 781–886; these read NSRS…QRQR and QQQQ…SVGV. 2 stretches are compositionally biased toward low complexity: residues 829-843 and 870-886; these read RAGG…NNNN and SSRS…SVGV.

It belongs to the immunoglobulin superfamily. IHOG family. Homodimer. Heterotetramer; 2 iHog chains bind 2 hh chains when facilitated by heparin, heparin is required to promote high-affinity interactions between hh and iHog.

It is found in the membrane. Functionally, mediates response to the active Hedgehog (Hh) protein signal in embryos, functioning upstream or at the level of patched (ptc). The protein is Interference hedgehog (ihog) of Drosophila melanogaster (Fruit fly).